We begin with the raw amino-acid sequence, 100 residues long: UPF0298 protein lp_2135 (100 aa).

It belongs to the UPF0298 family.

The protein resides in the cytoplasm. This is UPF0298 protein lp_2135 from Lactiplantibacillus plantarum (strain ATCC BAA-793 / NCIMB 8826 / WCFS1) (Lactobacillus plantarum).